The primary structure comprises 85 residues: Beta-insect depressant toxin Lqh-dprIT3d (85 aa).

The first 21 residues, 1 to 21 (MKLLLLLTISASMLIEGLVNA), serve as a signal peptide directing secretion. The LCN-type CS-alpha/beta domain occupies 22–82 (DGYIRGGDGC…EWDYETNTCG (61 aa)). Cystine bridges form between Cys-31/Cys-81, Cys-35/Cys-56, Cys-42/Cys-63, and Cys-46/Cys-65. The residue at position 82 (Gly-82) is a Glycine amide.

It belongs to the long (4 C-C) scorpion toxin superfamily. Sodium channel inhibitor family. Beta subfamily. In terms of tissue distribution, expressed by the venom gland.

It localises to the secreted. Depressant insect beta-toxins cause a transient contraction paralysis followed by a slow flaccid paralysis. They bind voltage-independently at site-4 of sodium channels (Nav) and block action potentials, primarily by depolarizing the axonal membrane and suppressing the sodium current. This depressant toxin is active only on insects. It is found in a relatively small amount in the venom, and its activity on insects is 10-fold higher compared to other known depressant toxins. This Leiurus hebraeus (Hebrew deathstalker scorpion) protein is Beta-insect depressant toxin Lqh-dprIT3d.